Consider the following 524-residue polypeptide: Bifunctional purine biosynthesis protein PurH (524 aa).

The region spanning 1-145 (MIKQALLSVS…KNHRDVTVIV (145 aa)) is the MGS-like domain.

The protein belongs to the PurH family.

It catalyses the reaction (6R)-10-formyltetrahydrofolate + 5-amino-1-(5-phospho-beta-D-ribosyl)imidazole-4-carboxamide = 5-formamido-1-(5-phospho-D-ribosyl)imidazole-4-carboxamide + (6S)-5,6,7,8-tetrahydrofolate. The catalysed reaction is IMP + H2O = 5-formamido-1-(5-phospho-D-ribosyl)imidazole-4-carboxamide. It participates in purine metabolism; IMP biosynthesis via de novo pathway; 5-formamido-1-(5-phospho-D-ribosyl)imidazole-4-carboxamide from 5-amino-1-(5-phospho-D-ribosyl)imidazole-4-carboxamide (10-formyl THF route): step 1/1. It functions in the pathway purine metabolism; IMP biosynthesis via de novo pathway; IMP from 5-formamido-1-(5-phospho-D-ribosyl)imidazole-4-carboxamide: step 1/1. This Cupriavidus metallidurans (strain ATCC 43123 / DSM 2839 / NBRC 102507 / CH34) (Ralstonia metallidurans) protein is Bifunctional purine biosynthesis protein PurH.